Reading from the N-terminus, the 236-residue chain is Serine/arginine-rich SC35-like splicing factor SCL28 (236 aa).

Disordered regions lie at residues 1–53 (MARA…LIRN) and 124–219 (EENR…RVLT). Basic and acidic residues predominate over residues 14–43 (RPRDRSPPRERKGYDDNRLRERPSSRDHES). The 79-residue stretch at 47-125 (SGLLIRNLPL…REIAIVFAEE (79 aa)) folds into the RRM domain. Over residues 149 to 176 (TSHRSPRRRYRSHSRSRSPPRRESRHSK) the composition is skewed to basic residues. S184 is subject to Phosphoserine. Basic and acidic residues predominate over residues 199 to 217 (RNEREYKSRNCRSPREERV).

This sequence belongs to the splicing factor SR family. SCL subfamily. In terms of assembly, component of the spliceosome. Interacts with RS2Z33, CYP59, CYP63 and CYP95.

The protein resides in the nucleus speckle. Its function is as follows. Involved in intron recognition and spliceosome assembly. Probably active at the 5' splice sites. In Arabidopsis thaliana (Mouse-ear cress), this protein is Serine/arginine-rich SC35-like splicing factor SCL28 (SCL28).